Here is a 438-residue protein sequence, read N- to C-terminus: (3,5-dihydroxyphenyl)acetyl-CoA 1,2-dioxygenase (438 aa).

Substrate is bound by residues D183, E189, 222–225 (HPRY), 233–238 (AGINLK), G296, 325–327 (IPG), and Q416.

This sequence belongs to the enoyl-CoA hydratase/isomerase family. As to quaternary structure, homohexamer; dimer of trimers.

The catalysed reaction is (3,5-dihydroxyphenyl)acetyl-CoA + O2 = 2-(3,5-dihydroxyphenyl)-2-oxoacetate + CoA + H(+). With respect to regulation, inhibited by DPA-S-(N-acetylcysteamine). In terms of biological role, involved in the biosynthesis of the nonproteinogenic amino acid monomer (S)-3,5-dihydroxyphenylglycine (Dpg) responsible of the production of vancomycin and teicoplanin antibiotics. Catalyzes the unusual conversion 3,5-dihydroxyphenylacetyl-CoA (DPA-CoA) to 3,5-dihydroxyphenylglyoxylate. DpgC performed a net four-electron oxidation of the benzylic carbon of DPA-CoA and the hydrolysis of the thioester bond to generate free CoA. DpgC has the ability to process a diverse range of substituted phenylacetyl-CoA substrates. The polypeptide is (3,5-dihydroxyphenyl)acetyl-CoA 1,2-dioxygenase (Streptomyces toyocaensis).